Here is a 120-residue protein sequence, read N- to C-terminus: Thiosulfate sulfurtransferase 16, chloroplastic (120 aa).

In terms of domain architecture, Rhodanese spans 20-120 (LLAGHRYLDV…WAKNGLPTKA (101 aa)). C80 functions as the Cysteine persulfide intermediate in the catalytic mechanism. R85 contributes to the substrate binding site.

In terms of assembly, monomer.

Its subcellular location is the plastid. The protein resides in the chloroplast. The catalysed reaction is thiosulfate + hydrogen cyanide = thiocyanate + sulfite + 2 H(+). In terms of biological role, thought to act during the early stages of leaf senescence. Catalyzes the transfer of a sulfur ion from a donor to cyanide or to other thiol compounds. Substrate preference is thiosulfate &gt; 3-mercaptopyruvate. This chain is Thiosulfate sulfurtransferase 16, chloroplastic (STR16), found in Arabidopsis thaliana (Mouse-ear cress).